The sequence spans 723 residues: Ribosome quality control complex subunit 1 (723 aa).

The tract at residues 21-125 is disordered; that stretch reads SNSNANKMTS…DKGSDDDDDD (105 aa). Positions 27–37 are enriched in polar residues; the sequence is KMTSGKSTAGN. Residues 93–108 show a composition bias toward basic residues; that stretch reads SSRRKKNKKAKRKQKN. A compositionally biased stretch (basic and acidic residues) spans 109-118; that stretch reads HTAEAAKDKG. Ser-119 carries the phosphoserine modification. A Phosphothreonine modification is found at Thr-158. Ser-160 carries the post-translational modification Phosphoserine.

This sequence belongs to the TCF25 family. In terms of assembly, component of the ribosome quality control complex (RQC), composed of the E3 ubiquitin ligase RKR1/LTN1, RQC1 and RQC2, as well as CDC48 and its ubiquitin-binding cofactors. RQC forms a stable complex with 60S ribosomal subunits.

The protein localises to the cytoplasm. Its function is as follows. Component of the ribosome quality control complex (RQC), a ribosome-associated complex that mediates ubiquitination and extraction of incompletely synthesized nascent chains for proteasomal degradation. Within the RQC complex, RQC1 is essential for the recruitment of CDC48 to incompletely synthesized nascent polypeptides that are ubiquitinated by RKR1/LTN1. This chain is Ribosome quality control complex subunit 1, found in Saccharomyces cerevisiae (strain ATCC 204508 / S288c) (Baker's yeast).